A 282-amino-acid chain; its full sequence is DNA-binding transcriptional repressor YiaJ (282 aa).

Over residues 1 to 20 the composition is skewed to basic and acidic residues; that stretch reads MGKEVMGKKENEMAQEKERP. A disordered region spans residues 1–21; sequence MGKEVMGKKENEMAQEKERPA. The HTH iclR-type domain maps to 23–85; that stretch reads SQSLFRGLML…PAAGSYRLTT (63 aa). Residues 45–64 constitute a DNA-binding region (H-T-H motif); it reads LAHLSELAGLNKSTVHRLLQ. The 173-residue stretch at 100–272 folds into the IclR-ED domain; sequence IIHIAAPHLE…AQAISNELGF (173 aa).

In terms of biological role, negatively controls the transcription of the yiaKLMNOPQRS operon, which may be involved in the utilization of 2,3-diketo-L-gulonate. The protein is DNA-binding transcriptional repressor YiaJ (yiaJ) of Escherichia coli (strain K12).